Here is a 222-residue protein sequence, read N- to C-terminus: uncharacterized protein (222 aa).

Helical transmembrane passes span 23 to 43, 67 to 87, 157 to 177, and 187 to 207; these read FFAAAMLPATLVIIFVETGLL, IWVLSPSVAVVAVLGDQIGYL, IVGGILWGGGVTVAGYFLGNV, and IILGILFVSLLPALIAAWHGY.

It belongs to the DedA family.

Its subcellular location is the cell membrane. This is an uncharacterized protein from Mycobacterium leprae (strain TN).